The primary structure comprises 190 residues: ATP synthase subunit b (190 aa).

Residues 24-44 (IVGSLICFVVILFFFWKLVLP) form a helical membrane-spanning segment.

This sequence belongs to the ATPase B chain family. In terms of assembly, F-type ATPases have 2 components, F(1) - the catalytic core - and F(0) - the membrane proton channel. F(1) has five subunits: alpha(3), beta(3), gamma(1), delta(1), epsilon(1). F(0) has three main subunits: a(1), b(2) and c(10-14). The alpha and beta chains form an alternating ring which encloses part of the gamma chain. F(1) is attached to F(0) by a central stalk formed by the gamma and epsilon chains, while a peripheral stalk is formed by the delta and b chains.

The protein resides in the cell membrane. Functionally, f(1)F(0) ATP synthase produces ATP from ADP in the presence of a proton or sodium gradient. F-type ATPases consist of two structural domains, F(1) containing the extramembraneous catalytic core and F(0) containing the membrane proton channel, linked together by a central stalk and a peripheral stalk. During catalysis, ATP synthesis in the catalytic domain of F(1) is coupled via a rotary mechanism of the central stalk subunits to proton translocation. In terms of biological role, component of the F(0) channel, it forms part of the peripheral stalk, linking F(1) to F(0). The sequence is that of ATP synthase subunit b from Leifsonia xyli subsp. xyli (strain CTCB07).